The sequence spans 326 residues: tRNA U34 carboxymethyltransferase (326 aa).

Residues Lys-95, Trp-109, Lys-114, Gly-134, 184 to 185 (VE), Tyr-204, and Arg-319 contribute to the carboxy-S-adenosyl-L-methionine site.

Belongs to the class I-like SAM-binding methyltransferase superfamily. CmoB family.

It catalyses the reaction carboxy-S-adenosyl-L-methionine + 5-hydroxyuridine(34) in tRNA = 5-carboxymethoxyuridine(34) in tRNA + S-adenosyl-L-homocysteine + H(+). Catalyzes carboxymethyl transfer from carboxy-S-adenosyl-L-methionine (Cx-SAM) to 5-hydroxyuridine (ho5U) to form 5-carboxymethoxyuridine (cmo5U) at position 34 in tRNAs. This Trichodesmium erythraeum (strain IMS101) protein is tRNA U34 carboxymethyltransferase.